A 217-amino-acid polypeptide reads, in one-letter code: Zinc finger CCHC-type and RNA-binding motif-containing protein 1 (217 aa).

One can recognise an RRM domain in the interval Ser-10–Asp-88. A CCHC-type zinc finger spans residues Ser-105–Lys-122. Residues Cys-120–Asp-217 are disordered. The span at Pro-145 to Ala-163 shows a compositional bias: acidic residues. Ser-155, Ser-210, and Ser-216 each carry phosphoserine.

As to quaternary structure, component of the U11/U12 snRNPs that are part of the U12-type spliceosome. Interacts with ZRSR1.

It is found in the nucleus. Its subcellular location is the nucleoplasm. This chain is Zinc finger CCHC-type and RNA-binding motif-containing protein 1 (ZCRB1), found in Bos taurus (Bovine).